Reading from the N-terminus, the 254-residue chain is Sec-independent protein translocase protein TatCy (254 aa).

6 helical membrane passes run 24 to 44, 67 to 87, 112 to 132, 157 to 177, 187 to 207, and 212 to 232; these read IVAL…KPII, LYVF…PVIL, VSIL…FPFV, FLLQ…ILMF, MFLA…AALI, and LLSH…SILI.

The protein belongs to the TatC family. Forms a complex with TatAy. Two types of complexes exist: one composed of TatAy and TatCy, and another composed only of TatAy.

It localises to the cell membrane. In terms of biological role, part of the twin-arginine translocation (Tat) system that transports large folded proteins containing a characteristic twin-arginine motif in their signal peptide across membranes. Required for YwbN secretion. The polypeptide is Sec-independent protein translocase protein TatCy (Bacillus subtilis (strain 168)).